The primary structure comprises 739 residues: Polyribonucleotide nucleotidyltransferase (739 aa).

Residues D514 and D520 each contribute to the Mg(2+) site. One can recognise a KH domain in the interval 580 to 639; the sequence is PRIITVKIPVDKIGEVIGPKGKMINQIQEDTGADITIEDDGTIYIGAAQGSQAEAARATI. An S1 motif domain is found at 651-723; sequence GERYLGTVVK…SRGKLSLIPV (73 aa).

Belongs to the polyribonucleotide nucleotidyltransferase family. Requires Mg(2+) as cofactor.

It localises to the cytoplasm. It catalyses the reaction RNA(n+1) + phosphate = RNA(n) + a ribonucleoside 5'-diphosphate. Functionally, involved in mRNA degradation. Catalyzes the phosphorolysis of single-stranded polyribonucleotides processively in the 3'- to 5'-direction. This chain is Polyribonucleotide nucleotidyltransferase, found in Streptomyces coelicolor (strain ATCC BAA-471 / A3(2) / M145).